Consider the following 413-residue polypeptide: Glucose-1-phosphate adenylyltransferase (413 aa).

Residues glycine 169, 184 to 185 (EK), and serine 201 contribute to the alpha-D-glucose 1-phosphate site.

It belongs to the bacterial/plant glucose-1-phosphate adenylyltransferase family. In terms of assembly, homotetramer.

It catalyses the reaction alpha-D-glucose 1-phosphate + ATP + H(+) = ADP-alpha-D-glucose + diphosphate. Its pathway is glycan biosynthesis; glycogen biosynthesis. Its function is as follows. Involved in the biosynthesis of ADP-glucose, a building block required for the elongation reactions to produce glycogen. Catalyzes the reaction between ATP and alpha-D-glucose 1-phosphate (G1P) to produce pyrophosphate and ADP-Glc. This Trichlorobacter lovleyi (strain ATCC BAA-1151 / DSM 17278 / SZ) (Geobacter lovleyi) protein is Glucose-1-phosphate adenylyltransferase.